A 501-amino-acid polypeptide reads, in one-letter code: Monocarboxylate transporter 1 (501 aa).

Residues 1 to 22 are Cytoplasmic-facing; it reads MPPAVGGPVGYTPPDGGWGWAV. Residues 23–44 form a helical membrane-spanning segment; sequence VIGAFISIGFSYAFPKSITVFF. Residue K38 participates in (S)-lactate binding. The Extracellular portion of the chain corresponds to 45–55; it reads KEIEGIFNATT. Residues 56–80 traverse the membrane as a helical segment; sequence SEVSWISSIMLAVMYGGGPISSVLV. Topologically, residues 81–84 are cytoplasmic; it reads NKYG. The chain crosses the membrane as a helical span at residues 85–105; the sequence is SRPVMIVGGILSGSGLIAASF. Residues 106-109 are Extracellular-facing; sequence CNTV. A helical membrane pass occupies residues 110-132; it reads QELYFSVGVIGGLGLAFNLNPAL. Over 133–146 the chain is Cytoplasmic; sequence TMIGKYFYKRRPLA. The chain crosses the membrane as a helical span at residues 147-169; the sequence is NGLAMAGSPVFLSTLAPLNQAFF. Over 170-174 the chain is Extracellular; the sequence is MIYGW. A helical transmembrane segment spans residues 175–194; sequence RGSFLILGGLLLNCCVAGAL. Topologically, residues 195–261 are cytoplasmic; sequence MRPIGPKPTT…FLDLSLFKHR (67 aa). A disordered region spans residues 201–236; it reads KPTTAEKEKSKGSLQEAGKYETKKGASDANTDLIGG. Phosphoserine is present on residues S210, S213, and S227. Residue T231 is modified to Phosphothreonine. Residues 262 to 288 traverse the membrane as a helical segment; the sequence is GFLLYLSGNVLMFFGLFTPLVFLSNYG. Residues 289–295 lie on the Extracellular side of the membrane; the sequence is KSKHYSS. The helical transmembrane segment at 296-317 threads the bilayer; sequence EKAAFLLSILAFVDMVARPSMG. D309 contributes to the H(+) binding site. R313 is a (S)-lactate binding site. Topologically, residues 318 to 328 are cytoplasmic; that stretch reads LVANTKWVRPR. The chain crosses the membrane as a helical span at residues 329 to 349; sequence VQYFFAASIIANGLCHLAAPL. Residues 350-353 lie on the Extracellular side of the membrane; that stretch reads SSTY. A helical membrane pass occupies residues 354-375; sequence IELCIYAGFFGFAFGWLSSVLF. Over 376–389 the chain is Cytoplasmic; the sequence is ETLMDLVGPQRFSS. A helical membrane pass occupies residues 390–410; the sequence is AVGLVTIVECCPVLLGPPVLG. At 411 to 421 the chain is on the extracellular side; it reads RLNDIYGDYKY. The helical transmembrane segment at 422-443 threads the bilayer; sequence TYWACGIILIVAGIYLFIGMGI. At 444 to 501 the chain is on the cytoplasmic side; it reads NYRLLEKEQKAEKQQKKESKDEETNVDVAEKPKEVIDAAESPEHKATEEDPKEAESPV. The segment at 454-501 is disordered; that stretch reads AEKQQKKESKDEETNVDVAEKPKEVIDAAESPEHKATEEDPKEAESPV. S462 is subject to Phosphoserine. A Phosphothreonine modification is found at T467. A phosphoserine mark is found at S484 and S499.

It belongs to the major facilitator superfamily. Monocarboxylate porter (TC 2.A.1.13) family. In terms of assembly, interacts with BSG; interaction mediates SLC16A1 targeting to the plasma membrane. Interacts with EMB; interaction mediates SLC16A1 targeting to the plasma membrane.

It is found in the cell membrane. The protein resides in the basolateral cell membrane. It localises to the apical cell membrane. It carries out the reaction (S)-lactate(in) + H(+)(in) = (S)-lactate(out) + H(+)(out). The catalysed reaction is acetate(out) + H(+)(out) = acetate(in) + H(+)(in). The enzyme catalyses acetoacetate(out) + H(+)(out) = acetoacetate(in) + H(+)(in). It catalyses the reaction pyruvate(out) + H(+)(out) = pyruvate(in) + H(+)(in). It carries out the reaction (R)-3-hydroxybutanoate(out) + H(+)(out) = (R)-3-hydroxybutanoate(in) + H(+)(in). The catalysed reaction is 3-methyl-2-oxobutanoate(out) + H(+)(out) = 3-methyl-2-oxobutanoate(in) + H(+)(in). The enzyme catalyses 4-methyl-2-oxopentanoate(out) + H(+)(out) = 4-methyl-2-oxopentanoate(in) + H(+)(in). It catalyses the reaction succinate(in) + 2 H(+)(in) = succinate(out) + 2 H(+)(out). Its function is as follows. Bidirectional proton-coupled monocarboxylate transporter. Catalyzes the rapid transport across the plasma membrane of many monocarboxylates such as lactate, pyruvate, acetate and the ketone bodies acetoacetate and beta-hydroxybutyrate, and thus contributes to the maintenance of intracellular pH. The transport direction is determined by the proton motive force and the concentration gradient of the substrate monocarboxylate. MCT1 is a major lactate exporter. Plays a role in cellular responses to a high-fat diet by modulating the cellular levels of lactate and pyruvate that contribute to the regulation of central metabolic pathways and insulin secretion, with concomitant effects on plasma insulin levels and blood glucose homeostasis. Facilitates the protonated monocarboxylate form of succinate export, that its transient protonation upon muscle cell acidification in exercising muscle and ischemic heart. Functions via alternate outward- and inward-open conformation states. Protonation and deprotonation of 309-Asp is essential for the conformational transition. In Bos taurus (Bovine), this protein is Monocarboxylate transporter 1 (SLC16A1).